The following is a 1040-amino-acid chain: ATPase family AAA domain-containing protein 2 (1040 aa).

The span at 1 to 11 (MSLLKMRRHAI) shows a compositional bias: basic residues. The segment at 1–30 (MSLLKMRRHAIHSSDSTSSSSSEDDCFERR) is disordered. Serine 65 is subject to Phosphoserine. 122-129 (GPPGTGKT) contributes to the ATP binding site. 2 positions are modified to phosphoserine: serine 401 and serine 406. 2 coiled-coil regions span residues 619 to 643 (LTAE…IFLR) and 735 to 761 (YAII…KKRG). The region spanning 629-741 (EQEEDTFREL…DTAYAIIKEE (113 aa)) is the Bromo domain. The tract at residues 772-799 (YHVMPKQNSPPVGDKKPDQEQNEKLKVP) is disordered. Glycyl lysine isopeptide (Lys-Gly) (interchain with G-Cter in SUMO2) cross-links involve residues lysine 777 and lysine 797. Positions 784–797 (GDKKPDQEQNEKLK) are enriched in basic and acidic residues. A phosphothreonine mark is found at threonine 801 and threonine 825. The segment covering 811 to 833 (LKRKFHKKSKWHVGTKIKRRKIS) has biased composition (basic residues). The interval 811–935 (LKRKFHKKSK…SQVTDIPEDS (125 aa)) is disordered. Positions 835-848 (AKDNSLNAMNSSSR) are enriched in polar residues. 3 positions are modified to phosphoserine: serine 849, serine 883, and serine 891. Composition is skewed to basic and acidic residues over residues 849-863 (SDTE…EHTE) and 874-885 (ESDKQNRLESNI). Basic and acidic residues predominate over residues 901 to 919 (EEPKETTEGTELRKDRIVC). Residue serine 951 is modified to Phosphoserine. The residue at position 972 (threonine 972) is a Phosphothreonine.

It belongs to the AAA ATPase family. As to quaternary structure, interacts with ESR1 and NCOA3 and these interactions are enhanced by estradiol. Interacts with acetylated lysine residues on histone H1.4, H2A, H2B and H3 (in vitro).

It localises to the nucleus. The enzyme catalyses ATP + H2O = ADP + phosphate + H(+). In terms of biological role, may be a transcriptional coactivator of the nuclear receptor ESR1 required to induce the expression of a subset of estradiol target genes, such as CCND1, MYC and E2F1. May play a role in the recruitment or occupancy of CREBBP at some ESR1 target gene promoters. May be required for histone hyperacetylation. This chain is ATPase family AAA domain-containing protein 2 (Atad2), found in Mus musculus (Mouse).